The sequence spans 543 residues: Chaperonin GroEL (543 aa).

ATP-binding positions include 29–32 (TLGP), 86–90 (DGTTT), Gly-413, 476–478 (NAA), and Asp-492.

It belongs to the chaperonin (HSP60) family. Forms a cylinder of 14 subunits composed of two heptameric rings stacked back-to-back. Interacts with the co-chaperonin GroES.

It is found in the cytoplasm. It catalyses the reaction ATP + H2O + a folded polypeptide = ADP + phosphate + an unfolded polypeptide.. Together with its co-chaperonin GroES, plays an essential role in assisting protein folding. The GroEL-GroES system forms a nano-cage that allows encapsulation of the non-native substrate proteins and provides a physical environment optimized to promote and accelerate protein folding. The sequence is that of Chaperonin GroEL from Streptococcus pyogenes serotype M1.